A 2485-amino-acid chain; its full sequence is Tyrosine-protein phosphatase non-receptor type 13 (2485 aa).

Positions 3-190 constitute a KIND domain; the sequence is VSLAEALEVR…SGTDQLSCNS (188 aa). The disordered stretch occupies residues 186–220; the sequence is LSCNSEQKPDRSQAIRDRLRGKGLPTGRSSTSDVL. Over residues 192–205 the composition is skewed to basic and acidic residues; it reads QKPDRSQAIRDRLR. S240 is subject to Phosphoserine. The disordered stretch occupies residues 260–283; that stretch reads SDNSGREDSENTFSPYQFKTSGPE. The segment covering 270–279 has biased composition (polar residues); the sequence is NTFSPYQFKT. A phosphoserine mark is found at S301 and S302. The interval 433-467 is disordered; that stretch reads RSEASKRFESSSGLPGVDETLSQGQSQRPSRQYET. Polar residues predominate over residues 452–465; sequence TLSQGQSQRPSRQY. Residues 469 to 504 are a coiled coil; that stretch reads FEGNLINQEIMLKRQEEELMQLQAKMALRQSRLSLY. Residues 572 to 872 form the FERM domain; sequence RKVNIMLLNG…YQHKFQLQMR (301 aa). Phosphoserine occurs at positions 890, 897, 908, 911, and 914. Disordered regions lie at residues 947–975 and 995–1049; these read QNSS…DLSQ and TVAE…IEDP. Residues 950–971 show a composition bias toward basic and acidic residues; sequence SKEKNDKASWEEKPREMSKSYH. Polar residues predominate over residues 1020–1032; sequence KLNNSKSVASLNR. Residues S1029, S1033, and S1085 each carry the phosphoserine modification. Residues 1033-1042 show a composition bias toward basic and acidic residues; the sequence is SPERRKHESD. The PDZ 1 domain maps to 1093–1178; sequence LVNLKKDAKY…EDVTLVISQP (86 aa). 2 disordered regions span residues 1227-1258 and 1273-1362; these read HISE…SLSQ and TWQE…SPPK. 3 stretches are compositionally biased toward polar residues: residues 1243–1258, 1273–1288, and 1327–1359; these read SLSS…SLSQ, TWQE…SVIS, and TYSS…FSSS. 2 PDZ domains span residues 1368–1452 and 1501–1588; these read EVEL…LEKG and EVKL…LCRP. Positions 1608-1630 are enriched in polar residues; that stretch reads AQVLPNSSKDSSQPSCVEQSTSS. Disordered regions lie at residues 1608 to 1665 and 1715 to 1751; these read AQVL…DLVT and PNKP…SSMD. Residues 1736-1749 are compositionally biased toward low complexity; it reads QSYQPQSESASSSS. 2 PDZ domains span residues 1788–1868 and 1882–1965; these read LITL…IGRV and PDIT…ATRN. The disordered stretch occupies residues 1971 to 1996; it reads PSSKRSAVSAPKSTKGNGSYSVGSCS. Polar residues predominate over residues 1973–1996; it reads SKRSAVSAPKSTKGNGSYSVGSCS. In terms of domain architecture, Tyrosine-protein phosphatase spans 2213–2467; the sequence is PSKELENLQE…IFCYQVILYV (255 aa). Substrate is bound by residues D2378, 2408-2414, and Q2452; that span reads CSAGIGR. Catalysis depends on C2408, which acts as the Phosphocysteine intermediate. A substrate region spans residues 2408-2414; it reads CSAGIGR.

The protein belongs to the protein-tyrosine phosphatase family. Non-receptor class subfamily. In terms of assembly, interacts (via the first PDZ domain) with PLEKHA1 and PLEKHA2. Interacts (via the second PDZ domain) with TNFRSF6 (Fas receptor) (via C-terminus). Interacts (via the second PDZ domain) with TRIP6 (via the third LIM domain and C-terminus). Interacts (via the third PDZ domain) with NGFR (via C-terminal SVP motif) and PKN2 (via C-terminus). Interacts (via the second or fourth PDZ domains) with PDLIM4 (via C-terminus only or via combined C-terminus and LIM domain, but not LIM domain only). Found in a complex with PDLIM4 and TRIP6. Interacts with PDLIM4; this interaction results in dephosphorylation of SRC 'Tyr-419' by this protein leading to its inactivation. Interacts with BRD7. Interacts with RAPGEF6. Interacts with ARHGAP29. Interacts with PIK3R2; dephosphorylates PIK3R2. Interacts with FBXL2. Interacts (via the FERM domain) with ENTR1. Found in a complex with ENTR1, PTPN13 and GIT1. Expressed in keratinocytes (at protein level). Present in most tissues with the exception of the liver and skeletal muscle. Most abundant in lung, kidney and fetal brain.

The protein resides in the cytoplasm. The protein localises to the cytoskeleton. It localises to the nucleus. Its subcellular location is the cell projection. It is found in the lamellipodium. The catalysed reaction is O-phospho-L-tyrosyl-[protein] + H2O = L-tyrosyl-[protein] + phosphate. In terms of biological role, tyrosine phosphatase which negatively regulates FAS-induced apoptosis and NGFR-mediated pro-apoptotic signaling. May regulate phosphoinositide 3-kinase (PI3K) signaling through dephosphorylation of PIK3R2. The polypeptide is Tyrosine-protein phosphatase non-receptor type 13 (PTPN13) (Homo sapiens (Human)).